A 156-amino-acid chain; its full sequence is Arginine repressor (156 aa).

Belongs to the ArgR family.

The protein resides in the cytoplasm. The protein operates within amino-acid biosynthesis; L-arginine biosynthesis [regulation]. In terms of biological role, regulates arginine biosynthesis genes. This Pectobacterium atrosepticum (strain SCRI 1043 / ATCC BAA-672) (Erwinia carotovora subsp. atroseptica) protein is Arginine repressor.